Reading from the N-terminus, the 205-residue chain is ATP-dependent dethiobiotin synthetase BioD (205 aa).

A Mg(2+)-binding site is contributed by Thr-16. Lys-32 is a catalytic residue. Thr-36 lines the substrate pocket. Glu-97 is a Mg(2+) binding site. ATP is bound at residue 97–100 (EGAG).

It belongs to the dethiobiotin synthetase family. In terms of assembly, homodimer. Mg(2+) serves as cofactor.

Its subcellular location is the cytoplasm. It catalyses the reaction (7R,8S)-7,8-diammoniononanoate + CO2 + ATP = (4R,5S)-dethiobiotin + ADP + phosphate + 3 H(+). Its pathway is cofactor biosynthesis; biotin biosynthesis; biotin from 7,8-diaminononanoate: step 1/2. Catalyzes a mechanistically unusual reaction, the ATP-dependent insertion of CO2 between the N7 and N8 nitrogen atoms of 7,8-diaminopelargonic acid (DAPA, also called 7,8-diammoniononanoate) to form a ureido ring. The protein is ATP-dependent dethiobiotin synthetase BioD of Paramagnetospirillum magneticum (strain ATCC 700264 / AMB-1) (Magnetospirillum magneticum).